Consider the following 207-residue polypeptide: MAQVVADPIVDKSAILKSELSKQPETLIAYAKWYGKVAGPITGVDLSAIDAKSLTLICTLSDGSKQQVRIELSPPLARYEDAKPRLLEMKTRALEGLGLTKTPVITNFIFPSLALKTTIWSVAGLLYLTFVPNPYLTGANIPRAWAAVGLIHGPQAIYTATLARKHVGNLTTGVSYVLGTLVFGFPFWIDLRQRITAARVESVAKIQ.

Transmembrane regions (helical) follow at residues 108–128 and 169–189; these read FIFP…LLYL and NLTT…PFWI.

It is found in the membrane. It participates in mycotoxin biosynthesis. In terms of biological role, part of the gene cluster that mediates the biosynthesis of strobilurin A, an antifungal polyketide that contains a key beta-methoxyacrylate toxophore that targets the complex III of the mitochondrial electron transport chain. Strobilurin biosynthesis begins with construction of benzoyl CoA by step-wise elimination of ammonia from phenylalanine by the phenylalanine ammonia-lyase str11, oxygenation by str8 and retro-Claisen reaction to form benzoic acid, which is activated to its CoA thiolester benzoyl CoA by the dedicated CoA ligase str10. Benzoyl CoA forms the starter unit for the highly reducing polyketide synthase stpks1 that produces the polyketide prestrobilutin A. The FAD-dependent oxygenase str9 then catalyzes the key oxidative rearrangement responsible for the creation of the beta-methoxyacrylate toxophore. Str9 performs epoxidation of the 2,3 olefin of prestrobilutin A, followed by Meinwald rearrangement to furnish the aldehyde intermediate. Rapid enolization of the aldehyde intermediate would give the beta-methoxyacrylate skeleton and methylations catalyzed by str2 and str3 complete the synthesis and lead to the production of strobilurin A. The short-chain dehydrogenase stl2 and the dehydrogenase str4 play a role in the shunt pathway leading to the production of bolineol. The cluster encodes no obvious halogenase gene that could be involved in production of strobilurin B, nor any obvious dimethylallyl-transferase that could be involved in the production of strobilurin G. It is possible that unknown proteins encoded in, or near, the cluster (such as str1 or stl1) may form new classes of halogenases or dimethylally-transferases, or that the responsible genes are located elsewhere on the genome. Similarly, proteins encoded by str5/str6 hydrolases appear to have no chemical role in the biosynthesis of strobilurin A. Finally, no obvious self-resistance gene is found within the cluster. This Strobilurus tenacellus protein is Strobilurin A biosynthesis cluster protein r1.